Reading from the N-terminus, the 864-residue chain is Dynamin-1 (864 aa).

Residues 28-294 (DLDLPQIAVV…LTNHIRDTLP (267 aa)) form the Dynamin-type G domain. A G1 motif region spans residues 38 to 45 (GGQSAGKS). Residues Ser41, Gly43, Lys44, Ser45, Ser46, Arg59, and Gly60 each contribute to the GDP site. The tract at residues 64-66 (VTR) is G2 motif. Residue Tyr80 is modified to Phosphotyrosine. Tyr125 is subject to 3'-nitrotyrosine; alternate. A Phosphotyrosine; alternate modification is found at Tyr125. The interval 136-139 (DLPG) is G3 motif. A G4 motif region spans residues 205–208 (TKLD). Residues Lys206, Asp208, Asp211, Asn236, Arg237, and Gln239 each coordinate GDP. The G5 motif stretch occupies residues 235 to 238 (VNRS). A phosphoserine mark is found at Ser306 and Ser347. The residue at position 354 (Tyr354) is a Phosphotyrosine. Ser512 carries the phosphoserine modification. One can recognise a PH domain in the interval 519–625 (LVIRKGWLTI…WKASFLRAGV (107 aa)). The GED domain occupies 659-750 (VETIRNLVDS…IIGDINTTTV (92 aa)). The tract at residues 767–864 (SVPAGRRSPT…PESPRPPFDL (98 aa)) is disordered. Ser774 carries the post-translational modification Phosphoserine; by GSK3-beta. The residue at position 778 (Ser778) is a Phosphoserine. At Arg796 the chain carries Omega-N-methylarginine. Ser822 is subject to Phosphoserine. A compositionally biased stretch (pro residues) spans 825-843 (PFGPPPQVPSRPNRAPPGV). Phosphoserine occurs at positions 851 and 857.

This sequence belongs to the TRAFAC class dynamin-like GTPase superfamily. Dynamin/Fzo/YdjA family. As to quaternary structure, homodimer; homodimerization is mediated by the dynamin-type G domain which promotes assembly-stimulated GTPase activity. Homo-tetramer formed from two dimers in the absence of lipid. Oligomerizes into a helical polymer that self-assembles around the vesicle membrane, when associated to the menbrane through lipid binding. Interacts (via C-terminal proline-rich domain (PRD)) with SNX9 (via SH3 domain); this interaction allows regulation of DNM1 self-assembly during late stages of endocytic vesicle formation and supports DNM1's early functions in accelerating clathrin-coated pits (CCPs) maturation in non neuronals cell. Interacts (via C-terminal proline-rich domain (PRD)) with MYO1E (via SH3 domain); this interaction regulates receptor-mediated endocytosis. Interacts with SNX33 (via SH3 domain); this interaction decreases DNM1-dependent endocytosis. Interacts with DIAPH1. Interacts with GRB2 (via SH3 domain); this interaction mediates disassembly of DNM1 polymers, therefore modulates self-assembly. Forms a complex with BIN1 (via SH3 domain) and SH3GL2 (via SH3 domain). Forms a complex with SH3GL2 (via SH3 domain) and AMPH (via SH3 domain). Forms a complex with SH3GL2 (via SH3 domain) and SYNJ1. Interacts with AMPH. Interacts (via C-terminal proline-rich domain (PRD)) with SYT1; this interaction facilitates vesicle fission during clathrin-mediated endocytosis (CME). Interacts (via C-terminal proline-rich domain (PRD)) with PLCG1 (via SH3 domain); this interaction stimulates the release of GDP from DNM1 and enhances DNM1-dependent endocytosis. Interacts with SNPH; this interaction inhibits the binding of DNM1 to AMPH and DNM1-receptor-mediated endocytosis. Interacts with CAV1. Interacts with SH3GLB1 (via SH3 domain). Interacts with PACSIN1 (via SH3 domain), PACSIN2 (via SH3 domain) and PACSIN3 (via SH3 domain). Interacts with UNC119; this interaction decreases DNM1's GTPase activity and affects DNM1's interaction with AMPH. Interacts (GTP-bound form) with DNAJC6; this interaction allows clathrin-coated vesicle (CCV) formation at the plasma membrane. Post-translationally, phosphorylation at Ser-774 by GSK3B/GSK3-beta leads to inactivation of receptor-mediated endocytosis in non-neuronal cells. Dephosphorylation at Ser-774, through the EGFR downstream signaling, leads to activation and regulates early stages of clathrin-mediated endocytosis (CME). Phosphorylated by CDK5 leading to synaptic vesicle endocytosis (SVE) activation.

It is found in the cell membrane. The protein resides in the membrane. The protein localises to the clathrin-coated pit. It localises to the cytoplasmic vesicle. Its subcellular location is the presynapse. It is found in the secretory vesicle. The protein resides in the chromaffin granule. The enzyme catalyses GTP + H2O = GDP + phosphate + H(+). GTPase activity is activated by 1-phosphatidyl-1D-myo-inositol 4,5-bisphosphate. GTPase activity is inhibited by the heterodimer G protein formed by GNB1 and GNG2 with an IC(50)=400 nM when DNM1 concentration is 5 nM. Functionally, catalyzes the hydrolysis of GTP and utilizes this energy to mediate vesicle scission and participates in many forms of endocytosis, such as clathrin-mediated endocytosis or synaptic vesicle endocytosis as well as rapid endocytosis (RE). Associates to the membrane, through lipid binding, and self-assembles into rings and stacks of interconnected rings through oligomerization to form a helical polymer around the vesicle membrane leading to constriction of invaginated coated pits around their necks. Self-assembly of the helical polymer induces membrane tubules narrowing until the polymer reaches a length sufficient to trigger GTP hydrolysis. Depending on the curvature imposed on the tubules, membrane detachment from the helical polymer upon GTP hydrolysis can cause spontaneous hemifission followed by complete fission. May play a role in regulating early stages of clathrin-mediated endocytosis in non-neuronal cells through its activation by dephosphorylation via the signaling downstream of EGFR. Controls vesicle size at a step before fission, during formation of membrane pits, at hippocampal synapses. Controls plastic adaptation of the synaptic vesicle recycling machinery to high levels of activity. Mediates rapid endocytosis (RE), a Ca(2+)-dependent and clathrin- and K(+)-independent process in chromaffin cells. Microtubule-associated force-producing protein involved in producing microtubule bundles and able to bind and hydrolyze GTP. Through its interaction with DNAJC6, acts during the early steps of clathrin-coated vesicle (CCV) formation. This is Dynamin-1 from Homo sapiens (Human).